The following is a 61-amino-acid chain: uncharacterized protein (61 aa).

This is an uncharacterized protein from Escherichia coli (strain K12).